The sequence spans 185 residues: Ribosome-recycling factor (185 aa).

The disordered stretch occupies residues 141-160; the sequence is RIQKDGEAGEDEVGRAEKEL.

It belongs to the RRF family.

It is found in the cytoplasm. Functionally, responsible for the release of ribosomes from messenger RNA at the termination of protein biosynthesis. May increase the efficiency of translation by recycling ribosomes from one round of translation to another. The chain is Ribosome-recycling factor from Rhodococcus jostii (strain RHA1).